Reading from the N-terminus, the 105-residue chain is Small ribosomal subunit protein uS10 (105 aa).

This sequence belongs to the universal ribosomal protein uS10 family. As to quaternary structure, part of the 30S ribosomal subunit.

Functionally, involved in the binding of tRNA to the ribosomes. The sequence is that of Small ribosomal subunit protein uS10 from Lachnoclostridium phytofermentans (strain ATCC 700394 / DSM 18823 / ISDg) (Clostridium phytofermentans).